The sequence spans 430 residues: Sphingosine-1-phosphate phosphatase 1 (430 aa).

The disordered stretch occupies residues Ser-34–Thr-103. Ser-101 is modified (phosphoserine). Thr-103 carries the post-translational modification Phosphothreonine. 4 helical membrane-spanning segments follow: residues Phe-121–Ile-141, Leu-152–Trp-172, Met-193–Tyr-213, and Trp-216–Leu-236. The tract at residues Lys-167–Pro-175 is phosphatase sequence motif I. The interval Pro-194–His-197 is phosphatase sequence motif II. His-197 functions as the Proton donor in the catalytic mechanism. Residues Ser-237–Asp-248 form a phosphatase sequence motif III region. His-244 serves as the catalytic Nucleophile. Helical transmembrane passes span Ile-246 to Leu-266, Tyr-279 to Asp-299, Ile-311 to Ser-331, Val-348 to Val-368, and Tyr-409 to Ile-429.

It belongs to the type 2 lipid phosphate phosphatase family. In terms of tissue distribution, highly expressed in liver and kidney. Expressed in epidermis, in the stratum granulosum and the stratum spinosum.

It is found in the endoplasmic reticulum membrane. The protein localises to the cell membrane. It carries out the reaction sphinganine 1-phosphate + H2O = sphinganine + phosphate. The catalysed reaction is sphing-4-enine 1-phosphate + H2O = sphing-4-enine + phosphate. Inhibited by NaF, sodium orthovanadate, propanolol, and N-ethylmaleimide. Specifically dephosphorylates sphingosine 1-phosphate (S1P), dihydro-S1P, and phyto-S1P. Does not act on ceramide 1-phosphate, lysophosphatidic acid or phosphatidic acid. Sphingosine-1-phosphate phosphatase activity is needed for efficient recycling of sphingosine into the sphingolipid synthesis pathway. Regulates the intracellular levels of the bioactive sphingolipid metabolite S1P that regulates diverse biological processes acting both as an extracellular receptor ligand or as an intracellular second messenger. Involved in efficient ceramide synthesis from exogenous sphingoid bases. Converts S1P to sphingosine, which is readily metabolized to ceramide via ceramide synthase. In concert with sphingosine kinase 2 (SphK2), recycles sphingosine into ceramide through a phosphorylation/dephosphorylation cycle. Regulates endoplasmic-to-Golgi trafficking of ceramides, resulting in the regulation of ceramide levels in the endoplasmic reticulum, preferentially long-chain ceramide species, and influences the anterograde membrane transport of both ceramide and proteins from the endoplasmic reticulum to the Golgi apparatus. The modulation of intracellular ceramide levels in turn regulates apoptosis. Via S1P levels, modulates resting tone, intracellular Ca(2+) and myogenic vasoconstriction in resistance arteries. Also involved in unfolded protein response (UPR) and ER stress-induced autophagy via regulation of intracellular S1P levels. Involved in the regulation of epidermal homeostasis and keratinocyte differentiation. The chain is Sphingosine-1-phosphate phosphatase 1 from Mus musculus (Mouse).